The chain runs to 481 residues: MVIFEKTRGKNSPSVMPSKKGDVSNIPANMLRSKKPILPEQAELDVVRHYTQLSRKNFCIDTNFYPLGSCTMKYNPRAAHKYASLAGFLERHPYASAQSVQGTLECLYDLQNLIKELTGMTGVSLAPMAGAQGEFAGVAMIKAYHHKRGDFERDEIIVPDAAHGTNPATAKVCGLKVIEIPTKKDGDIDIEALDKVLGPKTAGIMLTNPSTVGVFERNIAVIAKKVHEAGGLLYYDGANLNAIMGKARPGDMGFDVLHMNLHKTFATPHGGGGPGAGPVAVNDKLKEFLPVPMVGKKADKFVWLEEKDVPNTIGRLSAFNGNIGVLIRAYIYGAMLGGNGLTEASKIATLNANYMMARLKQEGFTIAYPERRASHEFIVTLKPEFQNYGVTATDFAKCLIDRGVHAPTMYFPLLVPECLLIEPTETENVDSMEKFIQAMVEIRDIAKKDPQYLKGAPYNLPARRLDDVKAAKELDIVWQPK.

Positions 1–23 (MVIFEKTRGKNSPSVMPSKKGDV) are disordered. Lys-263 is subject to N6-(pyridoxal phosphate)lysine.

This sequence belongs to the GcvP family. C-terminal subunit subfamily. As to quaternary structure, the glycine cleavage system is composed of four proteins: P, T, L and H. In this organism, the P 'protein' is a heterodimer of two subunits. Pyridoxal 5'-phosphate is required as a cofactor.

The catalysed reaction is N(6)-[(R)-lipoyl]-L-lysyl-[glycine-cleavage complex H protein] + glycine + H(+) = N(6)-[(R)-S(8)-aminomethyldihydrolipoyl]-L-lysyl-[glycine-cleavage complex H protein] + CO2. Functionally, the glycine cleavage system catalyzes the degradation of glycine. The P protein binds the alpha-amino group of glycine through its pyridoxal phosphate cofactor; CO(2) is released and the remaining methylamine moiety is then transferred to the lipoamide cofactor of the H protein. In Francisella philomiragia subsp. philomiragia (strain ATCC 25017 / CCUG 19701 / FSC 153 / O#319-036), this protein is Probable glycine dehydrogenase (decarboxylating) subunit 2.